The following is a 343-amino-acid chain: Chlorophyll(ide) b reductase NOL, chloroplastic (343 aa).

The N-terminal 54 residues, 1–54 (MAATAAYLPLRAQAQVGLAPLRPSGSAAAGARLPGRTARRRLAARGGPEAAGIR), are a transit peptide targeting the chloroplast. Residue 78–102 (ITGSTKGIGYALAKEFLKAGDNVVI) participates in NAD(+) binding. Tyrosine 228 acts as the Proton acceptor in catalysis.

This sequence belongs to the short-chain dehydrogenases/reductases (SDR) family. Interacts with NCY1 to form a complex that acts as a chlorophyll b reductase. Expressed in leaves and stems. Also detected in non-photosynthetic tissues such as roots.

The protein resides in the plastid. It localises to the chloroplast thylakoid membrane. It catalyses the reaction 7(1)-hydroxychlorophyllide a + NAD(+) = chlorophyllide b + NADH + H(+). It carries out the reaction 7(1)-hydroxychlorophyllide a + NADP(+) = chlorophyllide b + NADPH + H(+). Required for chlorophyll b degradation. The sequence is that of Chlorophyll(ide) b reductase NOL, chloroplastic (NOL) from Oryza sativa subsp. japonica (Rice).